The chain runs to 233 residues: Chromosome partition protein MukE (233 aa).

The segment at 207-233 (SLSLHDESDDADVTMGNAADSVEDEQE) is disordered.

Belongs to the MukE family. In terms of assembly, interacts, and probably forms a ternary complex, with MukF and MukB. The complex formation is stimulated by calcium or magnesium.

Its subcellular location is the cytoplasm. It is found in the nucleoid. Involved in chromosome condensation, segregation and cell cycle progression. May participate in facilitating chromosome segregation by condensation DNA from both sides of a centrally located replisome during cell division. Probably acts via its interaction with MukB and MukF. The chain is Chromosome partition protein MukE from Yersinia pestis.